The following is a 197-amino-acid chain: Chromophore lyase CpcT/CpeT (197 aa).

Belongs to the CpcT/CpeT biliprotein lyase family.

Functionally, covalently attaches a chromophore to Cys residue(s) of phycobiliproteins. In Synechococcus sp. (strain WH8103), this protein is Chromophore lyase CpcT/CpeT.